The primary structure comprises 921 residues: DNA ligase (921 aa).

NAD(+) is bound by residues 90-94 (DAAYD), 139-140 (SL), and E173. The N6-AMP-lysine intermediate role is filled by K175. Residues R196, E235, K360, and K384 each contribute to the NAD(+) site. Zn(2+)-binding residues include C481, C484, C500, and C506. Positions 663-688 (EAAIESAETQGGAASETTGAPTGAEA) are disordered. In terms of domain architecture, BRCT spans 839 to 921 (SLPQTLAGKT…AQLLETGSID (83 aa)).

The protein belongs to the NAD-dependent DNA ligase family. LigA subfamily. Mg(2+) serves as cofactor. It depends on Mn(2+) as a cofactor.

It catalyses the reaction NAD(+) + (deoxyribonucleotide)n-3'-hydroxyl + 5'-phospho-(deoxyribonucleotide)m = (deoxyribonucleotide)n+m + AMP + beta-nicotinamide D-nucleotide.. DNA ligase that catalyzes the formation of phosphodiester linkages between 5'-phosphoryl and 3'-hydroxyl groups in double-stranded DNA using NAD as a coenzyme and as the energy source for the reaction. It is essential for DNA replication and repair of damaged DNA. The sequence is that of DNA ligase from Bifidobacterium longum subsp. infantis (strain ATCC 15697 / DSM 20088 / JCM 1222 / NCTC 11817 / S12).